Here is a 247-residue protein sequence, read N- to C-terminus: GTP cyclohydrolase 1 type 2 homolog (247 aa).

5 residues coordinate a divalent metal cation: histidine 63, histidine 64, aspartate 101, histidine 215, and glutamate 219.

The protein belongs to the GTP cyclohydrolase I type 2/NIF3 family. As to quaternary structure, homohexamer.

The polypeptide is GTP cyclohydrolase 1 type 2 homolog (Buchnera aphidicola subsp. Baizongia pistaciae (strain Bp)).